The following is a 242-amino-acid chain: MPDYIRISRAADSLRDIKITPHFLPHTDGSCLIECGNTKVICTASIDENVPPFLRGKNQGWVTAEYGMLPASTASRMRREASAGKQSGRTQEIQRLIGRSLRAVVDMEKLGERQILIDCDVIQADGGTRTASITGAFVALQIAVGKLVSDGILSENPIREAVAAVSVGVVNGVPLLDLDYPEDSGCDSDVNIVMTASGKIIEIQGTAEDAPFSLDELGKLVALAQKGIGELLQHQQNALSAA.

Phosphate is bound by residues arginine 89 and 127-129; that span reads GTR.

This sequence belongs to the RNase PH family. In terms of assembly, homohexameric ring arranged as a trimer of dimers.

The catalysed reaction is tRNA(n+1) + phosphate = tRNA(n) + a ribonucleoside 5'-diphosphate. Functionally, phosphorolytic 3'-5' exoribonuclease that plays an important role in tRNA 3'-end maturation. Removes nucleotide residues following the 3'-CCA terminus of tRNAs; can also add nucleotides to the ends of RNA molecules by using nucleoside diphosphates as substrates, but this may not be physiologically important. Probably plays a role in initiation of 16S rRNA degradation (leading to ribosome degradation) during starvation. The chain is Ribonuclease PH from Neisseria meningitidis serogroup A / serotype 4A (strain DSM 15465 / Z2491).